A 449-amino-acid polypeptide reads, in one-letter code: Keratin, type I cytoskeletal 27 (449 aa).

The head stretch occupies residues methionine 1–asparagine 73. The coil 1A stretch occupies residues glutamate 74–tryptophan 109. Residues glutamate 74 to cysteine 389 form the IF rod domain. Positions tyrosine 110–isoleucine 131 are linker 1. The coil 1B stretch occupies residues isoleucine 132–leucine 223. The segment at glutamine 224–leucine 246 is linker 12. A coil 2 region spans residues leucine 247–aspartate 385. The tail stretch occupies residues glutamate 386–serine 449. The disordered stretch occupies residues leucine 425–serine 449. Basic and acidic residues predominate over residues histidine 430–serine 449.

Belongs to the intermediate filament family. As to quaternary structure, heterotetramer of two type I and two type II keratins. Interacts with KRT6A to form filaments.

It is found in the cytoplasm. Essential for the proper assembly of type I and type II keratin protein complexes and formation of keratin intermediate filaments in the inner root sheath (irs). The polypeptide is Keratin, type I cytoskeletal 27 (Rattus norvegicus (Rat)).